Consider the following 381-residue polypeptide: NF-kappa-B inhibitor-like protein 1 (381 aa).

The disordered stretch occupies residues 1–34; sequence MSNPSPQVPEEEASTSVCRPKSSMASTSRRQRRE. ANK repeat units lie at residues 64-93 and 97-133; these read GQPP…DPAH and HGDT…IKNK. Disordered stretches follow at residues 131–167, 186–242, and 256–294; these read KNKD…EWRQ, GDAS…QEEE, and ELRE…RGSL. Ser150 is subject to Phosphoserine. Positions 150–159 are enriched in acidic residues; it reads SAEEEEEDDA. Over residues 256 to 287 the composition is skewed to basic and acidic residues; that stretch reads ELRESRARRAQEALGDREPKPARAGPRAEHPR.

As to quaternary structure, interacts with CACTIN (via N-terminal domain); the interaction occurs in a pro-inflammatory-independent manner.

Its subcellular location is the nucleus. In terms of biological role, involved in the regulation of innate immune response. Acts as negative regulator of Toll-like receptor and interferon-regulatory factor (IRF) signaling pathways. Contributes to the negative regulation of transcriptional activation of NF-kappa-B target genes in response to endogenous pro-inflammatory stimuli. This Macaca mulatta (Rhesus macaque) protein is NF-kappa-B inhibitor-like protein 1 (NFKBIL1).